The sequence spans 296 residues: Fructose-bisphosphate aldolase class 1 (296 aa).

E175 functions as the Proton acceptor in the catalytic mechanism. K212 serves as the catalytic Schiff-base intermediate with dihydroxyacetone-P.

It belongs to the class I fructose-bisphosphate aldolase family.

The enzyme catalyses beta-D-fructose 1,6-bisphosphate = D-glyceraldehyde 3-phosphate + dihydroxyacetone phosphate. The protein operates within carbohydrate degradation; glycolysis; D-glyceraldehyde 3-phosphate and glycerone phosphate from D-glucose: step 4/4. The polypeptide is Fructose-bisphosphate aldolase class 1 (Staphylococcus aureus (strain Mu3 / ATCC 700698)).